Reading from the N-terminus, the 290-residue chain is 4-hydroxy-tetrahydrodipicolinate synthase (290 aa).

Residue Thr45 coordinates pyruvate. Residue Tyr133 is the Proton donor/acceptor of the active site. The active-site Schiff-base intermediate with substrate is the Lys161. Ile202 serves as a coordination point for pyruvate.

It belongs to the DapA family. As to quaternary structure, homotetramer; dimer of dimers.

It localises to the cytoplasm. The catalysed reaction is L-aspartate 4-semialdehyde + pyruvate = (2S,4S)-4-hydroxy-2,3,4,5-tetrahydrodipicolinate + H2O + H(+). It participates in amino-acid biosynthesis; L-lysine biosynthesis via DAP pathway; (S)-tetrahydrodipicolinate from L-aspartate: step 3/4. Functionally, catalyzes the condensation of (S)-aspartate-beta-semialdehyde [(S)-ASA] and pyruvate to 4-hydroxy-tetrahydrodipicolinate (HTPA). The sequence is that of 4-hydroxy-tetrahydrodipicolinate synthase from Alkalilimnicola ehrlichii (strain ATCC BAA-1101 / DSM 17681 / MLHE-1).